The following is a 313-amino-acid chain: Transaldolase (313 aa).

The active-site Schiff-base intermediate with substrate is the lysine 125.

The protein belongs to the transaldolase family. Type 1 subfamily. Homodimer.

The protein resides in the cytoplasm. The enzyme catalyses D-sedoheptulose 7-phosphate + D-glyceraldehyde 3-phosphate = D-erythrose 4-phosphate + beta-D-fructose 6-phosphate. It participates in carbohydrate degradation; pentose phosphate pathway; D-glyceraldehyde 3-phosphate and beta-D-fructose 6-phosphate from D-ribose 5-phosphate and D-xylulose 5-phosphate (non-oxidative stage): step 2/3. In terms of biological role, transaldolase is important for the balance of metabolites in the pentose-phosphate pathway. This is Transaldolase from Pseudomonas syringae pv. syringae (strain B728a).